A 140-amino-acid chain; its full sequence is MLKLRILSVGKTKEKWLEDAFNEYQKRLKANLQIECLWAKDSYQLLEWTQKESLIICLDPTGRLLTSEAFATFFSKCWEQGGSRLTIVIGGAEGLPLELKQHSILISLSLLTFTHQITRLILIEQIYRATEILKNSQYHK.

S-adenosyl-L-methionine-binding positions include leucine 58, glycine 90, and leucine 108 to phenylalanine 113.

The protein belongs to the RNA methyltransferase RlmH family. Homodimer.

Its subcellular location is the cytoplasm. The enzyme catalyses pseudouridine(1915) in 23S rRNA + S-adenosyl-L-methionine = N(3)-methylpseudouridine(1915) in 23S rRNA + S-adenosyl-L-homocysteine + H(+). Its function is as follows. Specifically methylates the pseudouridine at position 1915 (m3Psi1915) in 23S rRNA. In Protochlamydia amoebophila (strain UWE25), this protein is Ribosomal RNA large subunit methyltransferase H.